Reading from the N-terminus, the 559-residue chain is 3-phosphoinositide-dependent protein kinase 1 (559 aa).

At Y9 the chain carries Phosphotyrosine; by SRC and INSR. S25 carries the phosphoserine modification. The tract at residues 25–83 (SPSMVRSQTEPGSSPGIPSGVSRQGSTMDGTTAEARPSTNPLQQHPAQLPPQPRKKRPE) is disordered. The segment covering 35-44 (PGSSPGIPSG) has biased composition (low complexity). Residues 45–54 (VSRQGSTMDG) are compositionally biased toward polar residues. Positions 85-345 (FKFGKILGEG…YGPLKAHPFF (261 aa)) constitute a Protein kinase domain. ATP-binding positions include 95 to 97 (SFS) and K114. The tract at residues 116-160 (LEKRHIIKENKVPYVTRERDVMSRLDHPFFVKLYFTFQDDEKLYF) is PIF-pocket. Residues 163–165 (SYA) and E169 each bind ATP. D208 serves as the catalytic Proton acceptor. ATP contacts are provided by E212 and D226. Residue S244 is modified to Phosphoserine. K307 carries the N6-acetyllysine modification. Phosphothreonine; by MELK is present on T357. Phosphotyrosine; by SRC and INSR is present on residues Y376 and Y379. Residue S396 is modified to Phosphoserine. A Phosphoserine; by MAP3K5 modification is found at S397. Phosphoserine is present on S399. S401 carries the phosphoserine; by MAP3K5 modification. Residue S413 is modified to Phosphoserine. The region spanning 462-553 (KMGPVDKRKG…EVWRQQYQSN (92 aa)) is the PH domain. The residue at position 504 (S504) is a Phosphoserine; by PKC/PRKCQ. At T516 the chain carries Phosphothreonine; by autocatalysis. The residue at position 532 (S532) is a Phosphoserine; by PKC/PRKCQ.

It belongs to the protein kinase superfamily. AGC Ser/Thr protein kinase family. PDPK1 subfamily. Homodimer in its autoinhibited state. Active as monomer. Interacts with NPRL2, PAK1, PTK2B, GRB14, STRAP and IKKB. The Tyr-9 phosphorylated form interacts with SRC, RASA1 and CRK (via their SH2 domains). Interacts with SGK3 in a phosphorylation-dependent manner. The tyrosine-phosphorylated form interacts with PTPN6. The Ser-244 phosphorylated form interacts with YWHAH and YWHAQ. Binds INSR in response to insulin. Interacts (via PH domain) with SMAD3, SMAD4 and SMAD7. Interacts with PKN2; the interaction stimulates PDPK1 autophosphorylation, its PI(3,4,5)P3-dependent kinase activity toward 'Ser-473' of AKT1 but also activates its kinase activity toward PRKCD and PRKCZ. Interacts with PKN1 (via C-terminus) and PPARG. In terms of processing, phosphorylation on Ser-244 in the activation loop is required for full activity. PDPK1 itself can autophosphorylate Ser-244, leading to its own activation. Autophosphorylation is inhibited by the apoptotic C-terminus cleavage product of PKN2. Tyr-9 phosphorylation is critical for stabilization of both PDPK1 and the PDPK1/SRC complex via HSP90-mediated protection of PDPK1 degradation. Angiotensin II stimulates the tyrosine phosphorylation of PDPK1 in vascular smooth muscle in a calcium- and SRC-dependent manner. Phosphorylated on Tyr-9, Tyr-376 and Tyr-379 by INSR in response to insulin. Palmitate negatively regulates autophosphorylation at Ser-244 and palmitate-induced phosphorylation at Ser-532 and Ser-504 by PKC/PRKCQ negatively regulates its ability to phosphorylate PKB/AKT1. Phosphorylation at Thr-357 by MELK partially inhibits kinase activity, the inhibition is cooperatively enhanced by phosphorylation at Ser-397 and Ser-401 by MAP3K5. Monoubiquitinated in the kinase domain, deubiquitinated by USP4. In terms of tissue distribution, highly expressed in heart, brain, liver and testis, also expressed in embryonic cells.

Its subcellular location is the cytoplasm. The protein resides in the nucleus. It localises to the cell membrane. It is found in the cell junction. The protein localises to the focal adhesion. The enzyme catalyses L-seryl-[protein] + ATP = O-phospho-L-seryl-[protein] + ADP + H(+). The catalysed reaction is L-threonyl-[protein] + ATP = O-phospho-L-threonyl-[protein] + ADP + H(+). Its activity is regulated as follows. Homodimerization regulates its activity by maintaining the kinase in an autoinhibitory conformation. NPRL2 down-regulates its activity by interfering with tyrosine phosphorylation at the Tyr-9, Tyr-376 and Tyr-379 residues. The 14-3-3 protein YWHAQ acts as a negative regulator by association with the residues surrounding the Ser-244 residue. STRAP positively regulates its activity by enhancing its autophosphorylation and by stimulating its dissociation from YWHAQ. SMAD2, SMAD3, SMAD4 and SMAD7 also positively regulate its activity by stimulating its dissociation from YWHAQ. Activated by phosphorylation on Tyr-9, Tyr-376 and Tyr-379 by INSR in response to insulin. Its function is as follows. Serine/threonine kinase which acts as a master kinase, phosphorylating and activating a subgroup of the AGC family of protein kinases. Its targets include: protein kinase B (PKB/AKT1, PKB/AKT2, PKB/AKT3), p70 ribosomal protein S6 kinase (RPS6KB1), p90 ribosomal protein S6 kinase (RPS6KA1, RPS6KA2 and RPS6KA3), cyclic AMP-dependent protein kinase (PRKACA), protein kinase C (PRKCD and PRKCZ), serum and glucocorticoid-inducible kinase (SGK1, SGK2 and SGK3), p21-activated kinase-1 (PAK1), TSSK3, protein kinase PKN (PKN1 and PKN2). Plays a central role in the transduction of signals from insulin by providing the activating phosphorylation to PKB/AKT1, thus propagating the signal to downstream targets controlling cell proliferation and survival, as well as glucose and amino acid uptake and storage. Negatively regulates the TGF-beta-induced signaling by: modulating the association of SMAD3 and SMAD7 with TGF-beta receptor, phosphorylating SMAD2, SMAD3, SMAD4 and SMAD7, preventing the nuclear translocation of SMAD3 and SMAD4 and the translocation of SMAD7 from the nucleus to the cytoplasm in response to TGF-beta. Activates PPARG transcriptional activity and promotes adipocyte differentiation. Activates the NF-kappa-B pathway via phosphorylation of IKKB. The tyrosine phosphorylated form is crucial for the regulation of focal adhesions by angiotensin II. Controls proliferation, survival, and growth of developing pancreatic cells. Participates in the regulation of Ca(2+) entry and Ca(2+)-activated K(+) channels of mast cells. Essential for the motility of vascular endothelial cells (ECs) and is involved in the regulation of their chemotaxis. Plays a critical role in cardiac homeostasis by serving as a dual effector for cell survival and beta-adrenergic response. Plays an important role during thymocyte development by regulating the expression of key nutrient receptors on the surface of pre-T cells and mediating Notch-induced cell growth and proliferative responses. Provides negative feedback inhibition to toll-like receptor-mediated NF-kappa-B activation in macrophages. The polypeptide is 3-phosphoinositide-dependent protein kinase 1 (Pdpk1) (Mus musculus (Mouse)).